A 273-amino-acid chain; its full sequence is Shikimate dehydrogenase (NADP(+)) (273 aa).

Residues 15 to 17 (SLS) and T62 contribute to the shikimate site. K66 functions as the Proton acceptor in the catalytic mechanism. E78 provides a ligand contact to NADP(+). Shikimate is bound by residues N87 and D102. NADP(+) contacts are provided by residues 126–130 (GAGGA), 150–155 (NRTIEK), and I217. Residue Y219 participates in shikimate binding. An NADP(+)-binding site is contributed by G240.

The protein belongs to the shikimate dehydrogenase family. Homodimer.

The catalysed reaction is shikimate + NADP(+) = 3-dehydroshikimate + NADPH + H(+). It functions in the pathway metabolic intermediate biosynthesis; chorismate biosynthesis; chorismate from D-erythrose 4-phosphate and phosphoenolpyruvate: step 4/7. Functionally, involved in the biosynthesis of the chorismate, which leads to the biosynthesis of aromatic amino acids. Catalyzes the reversible NADPH linked reduction of 3-dehydroshikimate (DHSA) to yield shikimate (SA). This chain is Shikimate dehydrogenase (NADP(+)), found in Nitrosopumilus maritimus (strain SCM1).